A 147-amino-acid chain; its full sequence is Spanin, inner membrane subunit (147 aa).

The Cytoplasmic segment spans residues 1–7 (MLEFLRK). The chain crosses the membrane as a helical; Signal-anchor for type II membrane protein span at residues 8–24 (LIPWVLAGMLFGLGWHL). Topologically, residues 25–143 (GSDSMDAKWK…QDTIRELQRK (119 aa)) are periplasmic.

Belongs to the T7likevirus i-spanin family. In terms of assembly, interacts (via C-terminus) with the spanin outer lipoprotein subunit (o-spanin) (via C-terminus). Part of the spanin complex which spans the entire periplasmic space. The spanin complex is composed of spanin inner membrane subunit and spanin outer membrane subunit.

The protein localises to the host cell inner membrane. Functionally, component of the spanin complex that disrupts the host outer membrane and participates in cell lysis during virus exit. The spanin complex conducts the final step in host lysis by disrupting the outer membrane after holin and endolysin action have permeabilized the inner membrane and degraded the host peptidoglycans. Host outer membrane disruption is possibly due to local fusion between the inner and outer membrane performed by the spanin complex. In Escherichia coli (Bacteriophage T3), this protein is Spanin, inner membrane subunit (18.5).